The following is a 157-amino-acid chain: MADKAASGVLTKLPQKQIQEMKEAFSMIDVDRDGFVSKEDIKAISEQLGRAPDDKELTAMLKEAPGPLNFTMFLSIFSDKLSGTDSEETIRNAFAMFDEQETKKLNIEYIKDLLENMGDNFNKDEMRMTFKEAPVEGGKFDYVKFTAMIKGSGEEEA.

EF-hand domains lie at 16–51 (KQIQ…LGRA) and 85–120 (DSEE…MGDN). Residues aspartate 29, aspartate 31, aspartate 33, and aspartate 40 each coordinate Ca(2+).

Its function is as follows. In molluscan muscle, calcium regulation is associated with myosin rather than with actin. Muscle myosin contains two types of light chains: the catalytic light chain, essential for ATPase activity, and the regulatory light chain, a calcium-binding protein responsible for Ca(2+) dependent binding and Ca(2+) dependent Mg-ATPase activity. This chain is Myosin regulatory light chain, striated adductor muscle, found in Argopecten irradians (Bay scallop).